A 321-amino-acid polypeptide reads, in one-letter code: Transmembrane protein 255A (321 aa).

4 helical membrane passes run valine 29–alanine 49, valine 56–isoleucine 76, leucine 88–valine 108, and threonine 200–phenylalanine 220. Polar residues predominate over residues serine 279–tryptophan 297. Positions serine 279 to asparagine 300 are disordered.

This sequence belongs to the TMEM255 family.

Its subcellular location is the membrane. The polypeptide is Transmembrane protein 255A (tmem255a) (Xenopus laevis (African clawed frog)).